The sequence spans 64 residues: MPKMKTHRGAAKRLKKTGTGKLKRAKAFKKHILTKKSAKTKMNLRKSTLVSDGDAKRIAQLLPY.

The segment at 1-25 (MPKMKTHRGAAKRLKKTGTGKLKRA) is disordered.

It belongs to the bacterial ribosomal protein bL35 family.

In Clostridioides difficile (strain 630) (Peptoclostridium difficile), this protein is Large ribosomal subunit protein bL35.